Consider the following 247-residue polypeptide: uncharacterized protein (247 aa).

6 helical membrane passes run 19-39 (IFFTFLLCFIICTIYSESIMF), 73-93 (FFTSIYCTFPYFFYQFWAFFI), 106-126 (FLSFFFFTLLFFSCIIIYFII), 155-175 (YIQFTFQIFSYFFVLFQCPLF), 196-216 (YIYFLFLILAAFLSPPDILSQ), and 217-237 (FFLFSLIVFMYELCVFYSCFY).

Belongs to the TatC family.

Its subcellular location is the mitochondrion membrane. This is an uncharacterized protein from Nephroselmis olivacea (Green alga).